An 873-amino-acid chain; its full sequence is F-BAR domain only protein 1 (873 aa).

Residues 1-248 (MSYFGEHFWG…NVENVTVDML (248 aa)) form the F-BAR domain. Residues 1 to 275 (MSYFGEHFWG…LDFDAYSSAA (275 aa)) are mediates membrane-binding. Residues 153 to 172 (RENTSQKEMDKAETKSKKAA) are disordered. The stretch at 155 to 178 (NTSQKEMDKAETKSKKAADSLRRS) forms a coiled coil. The mediates interaction with the adaptor protein complex AP-2 stretch occupies residues 267-439 (DFDAYSSAAL…KSLFGPPLES (173 aa)). Phosphoserine is present on residues serine 295, serine 343, and serine 368. The tract at residues 302–347 (SVDFLESDSGVPPEVDDEGFTVRPDISQNNGAEPPRFSSSDSDFDD) is disordered. Disordered stretches follow at residues 381-600 (GSLI…RGPS) and 813-833 (SGHLSASWQPQSGPSTPSPVA). A compositionally biased stretch (low complexity) spans 447-466 (TGSSSLGFTSSPSPFSSSSP). Position 518 is a phosphoserine (serine 518). The segment covering 567 to 576 (SLSPSPLGSS) has biased composition (low complexity). The segment at 593-873 (HGISRGPSPV…FATGMYLVSC (281 aa)) is mediates interaction with AGFG1, CALM, DAB2, EPS15, EPS15R, ITSN1 and clathrin. Position 600 is a phosphoserine (serine 600). The 264-residue stretch at 609 to 872 (ALPVATAFTE…RFATGMYLVS (264 aa)) folds into the MHD domain. Residues 816 to 827 (LSASWQPQSGPS) show a composition bias toward polar residues.

Belongs to the FCHO family. As to quaternary structure, may oligomerize and form homotetramer. Interacts with AP2A2 and AP2B1; 2 subunits of the adaptor protein complex AP-2. Interacts with DAB2. Interacts with clathrin (CLTC or CLTCL1). Interacts with EPS15, EPS15R and ITSN1. Interacts with AGFG1 and CALM. May interact with ACVR1; linking this receptor to clathrin-mediated endocytosis. Mainly detected in brain and spleen.

Its subcellular location is the membrane. It is found in the clathrin-coated pit. In terms of biological role, functions in an early step of clathrin-mediated endocytosis. Has both a membrane binding/bending activity and the ability to recruit proteins essential to the formation of functional clathrin-coated pits. May regulate Bmp signaling by regulating clathrin-mediated endocytosis of Bmp receptors. Involved in the regulation of T-cell poliferation and activation. Affects TCR clustering upon receptor triggering and modulates its internalisation, playing a role in TCR-dependent T-cell activation. The protein is F-BAR domain only protein 1 of Mus musculus (Mouse).